The following is a 573-amino-acid chain: Putative adenine deaminase PTO1085 (573 aa).

The protein belongs to the metallo-dependent hydrolases superfamily. Adenine deaminase family.

It catalyses the reaction adenine + H2O + H(+) = hypoxanthine + NH4(+). The protein is Putative adenine deaminase PTO1085 of Picrophilus torridus (strain ATCC 700027 / DSM 9790 / JCM 10055 / NBRC 100828 / KAW 2/3).